Here is a 1257-residue protein sequence, read N- to C-terminus: Bifunctional autolysin (1257 aa).

A signal peptide spans 1 to 29 (MAKKFNYKLPSMVALTLVGSAVTAHQVQA). The span at 99 to 137 (QVNGDTRATQSTTSNNAKPVTKSTNTTAPKTNNNVTSAG) shows a compositional bias: polar residues. Disordered regions lie at residues 99–150 (QVNG…NSEN), 173–217 (AAPK…KYKP), and 417–441 (TQST…PSTG). Composition is skewed to low complexity over residues 173–208 (AAPK…AAAP) and 419–440 (STTT…TPST). The segment at 197-776 (ASAQPRSAAA…AVAQPKTAVK (580 aa)) is N-acetylmuramoyl-L-alanine amidase. GW domains are found at residues 444–518 (TVAA…YNTA), 520–594 (SPVN…DTAK), 613–687 (TVSS…YNNA), 689–763 (SPVN…VPAA), 785–860 (TTQT…VQNL), 862–937 (KEVK…APTA), and 944–1018 (AAKD…KELI). The tract at residues 777–1257 (AYAVTKPQTT…GKYFDIPQYK (481 aa)) is endo-beta-N-acetylglucosaminidase.

In the N-terminal section; belongs to the N-acetylmuramoyl-L-alanine amidase 2 family. It in the C-terminal section; belongs to the glycosyl hydrolase 73 family. In terms of assembly, oligomer; forms a ring structure at the cell surface which is important for efficient partitioning of daughter cells after cell division. Post-translationally, undergoes proteolytic processing to generate the two extracellular lytic enzymes, probably at the septal region on the cell surface.

The protein localises to the secreted. It catalyses the reaction Hydrolyzes the link between N-acetylmuramoyl residues and L-amino acid residues in certain cell-wall glycopeptides.. The catalysed reaction is an N(4)-(oligosaccharide-(1-&gt;3)-[oligosaccharide-(1-&gt;6)]-beta-D-Man-(1-&gt;4)-beta-D-GlcNAc-(1-&gt;4)-alpha-D-GlcNAc)-L-asparaginyl-[protein] + H2O = an oligosaccharide-(1-&gt;3)-[oligosaccharide-(1-&gt;6)]-beta-D-Man-(1-&gt;4)-D-GlcNAc + N(4)-(N-acetyl-beta-D-glucosaminyl)-L-asparaginyl-[protein]. Its function is as follows. Endohydrolysis of the di-N-acetylchitobiosyl unit in high-mannose glycopeptides and glycoproteins containing the -[(Man)5(GlcNAc)2]-Asn structure. One N-acetyl-D-glucosamine residue remains attached to the protein; the rest of the oligosaccharide is released intact. Cleaves the peptidoglycan connecting the daughter cells at the end of the cell division cycle, resulting in the separation of the two newly divided cells. Acts as an autolysin in penicillin-induced lysis. The polypeptide is Bifunctional autolysin (atl) (Staphylococcus aureus (strain MRSA252)).